Here is a 290-residue protein sequence, read N- to C-terminus: UPF0761 membrane protein YihY (290 aa).

6 helical membrane-spanning segments follow: residues 44–64 (LLSL…FPMF), 104–124 (VGAC…DSAL), 140–160 (FAVY…SLAI), 183–203 (IFPL…VPTI), 210–230 (AIVG…GFAL), and 244–264 (VLAV…IVLL).

Belongs to the UPF0761 family.

The protein localises to the cell inner membrane. This Escherichia coli O1:K1 / APEC protein is UPF0761 membrane protein YihY.